The chain runs to 274 residues: MSISYNVFDIAVNPTYYSFEKLKLIVEKAKELKILPLFIGLDMETNIQVIHLSKMQQTLCYCGIHPTHINTLYKENNIWNILDIVQADLKQLFVENSEYIIAIGECGLDYYRNQLKIEQQRIFKMQLELSYLNIPYFLHMRNAFDDFYNIIKNYTNVTGVIHSFDGTVDQALALINLGFYIGINGCSLKNNIDLVKNIPIDKILVETDSPFCLIRKSYAGAEYGKVLKVKENEPVYILNLIEIISNIKQMPIQQLIHQFKLNTIKCFPQLKKFQ.

Glutamate 105, histidine 139, histidine 162, and aspartate 208 together coordinate a divalent metal cation.

Belongs to the metallo-dependent hydrolases superfamily. TatD-type hydrolase family. A divalent metal cation is required as a cofactor.

It localises to the nucleus. Putative deoxyribonuclease. The sequence is that of Putative deoxyribonuclease TATDN1 homolog from Enterocytozoon bieneusi (strain H348) (Microsporidian parasite).